Consider the following 3410-residue polypeptide: Genome polyprotein (3410 aa).

Residues 1–103 lie on the Cytoplasmic side of the membrane; the sequence is MTKKPGRPGR…DFVHLPKKKS (103 aa). The interaction with host EXOC1 stretch occupies residues 2-15; that stretch reads TKKPGRPGRNRAVN. Residues 38 to 73 form a hydrophobic; homodimerization of capsid protein C region; it reads LLDGRGPLRMVLAILAFFRFTALKPTAGLLKRWGMM. A propeptide spans 103-119 (ER anchor for the capsid protein C, removed in mature form by serine protease NS3); it reads SGVSIIGRMLVFSFTAA. Residues 104 to 124 form a helical membrane-spanning segment; the sequence is GVSIIGRMLVFSFTAAVRVTL. Residues 125 to 245 lie on the Extracellular side of the membrane; it reads ENGMSLMKIQ…ATSYLTKAES (121 aa). Residues 246–266 form a helical membrane-spanning segment; the sequence is WALRNPGYALVAAVLGWSLGT. The Cytoplasmic portion of the chain corresponds to 267–271; that stretch reads SNAQK. The chain crosses the membrane as a helical span at residues 272–286; sequence VIFTVMILLIAPAYS. Topologically, residues 287–739 are extracellular; sequence IRCVGVENRD…QIFGGMFRTL (453 aa). 6 cysteine pairs are disulfide-bonded: Cys289–Cys316, Cys346–Cys402, Cys346–Cys407, Cys360–Cys391, Cys378–Cys402, and Cys378–Cys407. The fusion peptide stretch occupies residues 384-397; the sequence is DRGWGNGCGLFGKG. Asn440 is a glycosylation site (N-linked (GlcNAc...) asparagine; by host). 2 disulfides stabilise this stretch: Cys476–Cys574 and Cys591–Cys622. Residues 740–760 traverse the membrane as a helical segment; the sequence is FGGMSWFTQIMIGALCCWLGI. At 761-766 the chain is on the cytoplasmic side; sequence NARDRT. Residues 767-787 traverse the membrane as a helical segment; that stretch reads IAVTFLAVGGVLVFLATSVNA. At 788 to 1165 the chain is on the extracellular side; sequence DSGCALDLKR…IALQEVMRKR (378 aa). Cystine bridges form between Cys791/Cys802, Cys842/Cys928, Cys964/Cys1009, Cys1066/Cys1115, Cys1077/Cys1098, Cys1077/Cys1099, Cys1098/Cys1102, and Cys1099/Cys1102. Asn915 carries an N-linked (GlcNAc...) asparagine; by host glycan. The helical transmembrane segment at 1166–1186 threads the bilayer; sequence ILGRHITWMVIAVFMAMILGG. At 1187–1214 the chain is on the cytoplasmic side; it reads LSYRDLGRYLVLVGAAFAERNSGGDLLH. The chain crosses the membrane as a helical span at residues 1215 to 1235; sequence LVLVATFKVKPMALLGFVLGG. Residues 1236-1242 are Lumenal-facing; it reads RWCRRQS. The helical transmembrane segment at 1243–1263 threads the bilayer; the sequence is LLLSIGAVLVNFALEFQGGYF. Residues 1264–1284 are Cytoplasmic-facing; the sequence is ELVDSLALALLFVKAVVQTDT. A helical transmembrane segment spans residues 1285–1305; that stretch reads TSVSLPLLAALAPAGCYTVLG. Topologically, residues 1306–1335 are lumenal; that stretch reads THRFIMLTLVLVTFLGCKKTASVKKAGTAA. A helical transmembrane segment spans residues 1336-1356; that stretch reads VGVVLGMVGMKTIPMLGMLMV. Over 1357-1363 the chain is Cytoplasmic; that stretch reads TSRARRS. A helical membrane pass occupies residues 1364–1384; that stretch reads WPLHEAMAAVGILCALFGALA. Residues 1385-1387 lie on the Lumenal side of the membrane; sequence ETE. A helical membrane pass occupies residues 1388-1408; it reads VDLAGPLAAAGLIVMAYVISG. The Cytoplasmic segment spans residues 1409–1464; it reads RSNDLSIKKVEDVKWSDEAEVTGESVSYHVSLDVRGDPTLTEDSGPGLEKVLLKVG. The interval 1415–1454 is interacts with and activates NS3 protease; it reads IKKVEDVKWSDEAEVTGESVSYHVSLDVRGDPTLTEDSGP. The segment at residues 1465 to 1485 is an intramembrane region (helical); the sequence is LMAISGIYPVAIPFALGAWFF. Over 1486–2158 the chain is Cytoplasmic; it reads LEKRCKRAGA…KAALENSPEM (673 aa). The 178-residue stretch at 1493–1670 folds into the Peptidase S7 domain; the sequence is AGALWDIPSP…ENVGQEDGAE (178 aa). Catalysis depends on charge relay system; for serine protease NS3 activity residues His1543, Asp1567, and Ser1627. The Helicase ATP-binding domain maps to 1673-1829; sequence DNWFRKRELT…PSNSPIIDEE (157 aa). The interval 1677 to 1680 is important for RNA-binding; that stretch reads RKRE. 1686–1693 contacts ATP; that stretch reads LHPGAGKT. Residues 1777 to 1780 carry the DEAH box motif; it reads DEAH. Residues 1839-2006 form the Helicase C-terminal domain; that stretch reads SGYEWIIEFD…QLYTPEREKT (168 aa). Lys1881 is subject to N6-acetyllysine; by host. Positions 2153-2157 are regulates the ATPase activity of NS3 helicase; the sequence is ENSPE. The helical transmembrane segment at 2159-2179 threads the bilayer; that stretch reads IETFLLCALVCLMTIGLVVVL. At 2180–2185 the chain is on the lumenal side; that stretch reads VRGKGP. An intramembrane region (helical) is located at residues 2186-2205; sequence GKLAFGMVSIGVMTWLLWSA. Residue Gly2206 is a topological domain, lumenal. A helical transmembrane segment spans residues 2207-2227; sequence VDPGKIAAAVILVFLLLVVLI. At 2228–2242 the chain is on the cytoplasmic side; the sequence is PEPEKQRSVQDNQLA. The helical transmembrane segment at 2243–2257 threads the bilayer; that stretch reads MLMLLIATILGGVAA. Residues 2258–2293 lie on the Lumenal side of the membrane; it reads NEMGWLEKTKADLSWVVRGRSSTTTPVVELDMKPAT. Positions 2294–2314 form an intramembrane region, helical; the sequence is AWTLYALATTLLTPLFQHLIV. Over 2315–2336 the chain is Lumenal; that stretch reads TKYANISLMAIASQAGTLFSMD. A helical transmembrane segment spans residues 2337–2357; the sequence is SGIPFSSIELSVPLLALGCWT. A topological domain (cytoplasmic) is located at residue Gln2358. A helical transmembrane segment spans residues 2359–2379; that stretch reads ITPCSLILACVLLSTHYAILL. Over 2380–2420 the chain is Lumenal; sequence PGMQAQAARDAQRRTAAGIMKNAVVDGIVATDIPPLDGAGP. Residues 2421–2441 form a helical membrane-spanning segment; it reads LTEKKLGQLLLFAAAVTGVVI. At 2442 to 3410 the chain is on the cytoplasmic side; sequence TRSPRSWSEL…EKRVEFRGVL (969 aa). Positions 2508-2773 constitute an mRNA cap 0-1 NS5-type MT domain; sequence GGGIGETLGE…DVNLSCGTRA (266 aa). Ser2563 provides a ligand contact to S-adenosyl-L-methionine. At Ser2563 the chain carries Phosphoserine. The For 2'-O-MTase activity role is filled by Lys2568. The S-adenosyl-L-methionine site is built by Gly2593, Trp2594, Thr2611, Lys2612, Asp2638, and Val2639. The active-site For 2'-O-MTase activity is Asp2653. Ile2654 provides a ligand contact to S-adenosyl-L-methionine. Residues Lys2690 and Glu2726 each act as for 2'-O-MTase activity in the active site. Tyr2728 contributes to the S-adenosyl-L-methionine binding site. Residues Glu2947, His2951, Cys2956, and Cys2959 each contribute to the Zn(2+) site. The RdRp catalytic domain maps to 3036-3187; it reads GILYADDTAG…AAPDARFGAA (152 aa). Zn(2+) is bound by residues His3222, Cys3238, and Cys3356.

This sequence in the N-terminal section; belongs to the class I-like SAM-binding methyltransferase superfamily. mRNA cap 0-1 NS5-type methyltransferase family. As to quaternary structure, homodimer. Interacts (via N-terminus) with host EXOC1 (via C-terminus); this interaction results in EXOC1 degradation through the proteasome degradation pathway. In terms of assembly, forms heterodimers with envelope protein E in the endoplasmic reticulum and Golgi. Homodimer; in the endoplasmic reticulum and Golgi. Interacts with protein prM. Interacts with non-structural protein 1. As to quaternary structure, homodimer; Homohexamer when secreted. Interacts with envelope protein E. NS1 interacts with NS4B. Interacts with host complement protein CFH; this interaction leads to the degradation of C3. In terms of assembly, interacts (via N-terminus) with serine protease NS3. Forms a heterodimer with serine protease NS3. May form homooligomers. As to quaternary structure, forms a heterodimer with NS2B. Interacts with non-structural protein 2A (via N-terminus). Interacts with NS4B. Interacts with unphosphorylated RNA-directed RNA polymerase NS5; this interaction stimulates RNA-directed RNA polymerase NS5 guanylyltransferase activity. In terms of assembly, interacts with serine protease NS3. Homodimer. Interacts with host STAT2; this interaction inhibits the phosphorylation of the latter, and, when all viral proteins are present (polyprotein), targets STAT2 for degradation. In terms of processing, specific enzymatic cleavages in vivo yield mature proteins. Cleavages in the lumen of endoplasmic reticulum are performed by host signal peptidase, whereas cleavages in the cytoplasmic side are performed by serine protease NS3. Signal cleavage at the 2K-4B site requires a prior NS3 protease-mediated cleavage at the 4A-2K site. Cleaved in post-Golgi vesicles by a host furin, releasing the mature small envelope protein M, and peptide pr. This cleavage is incomplete as up to 30% of viral particles still carry uncleaved prM. Post-translationally, N-glycosylated. In terms of processing, N-glycosylated. The excreted form is glycosylated and this is required for efficient secretion of the protein from infected cells. Acetylated by host KAT5. Acetylation modulates NS3 RNA-binding and unwinding activities and plays an important positive role for viral replication. Post-translationally, phosphorylated on serines residues. This phosphorylation may trigger NS5 nuclear localization.

The protein localises to the virion. Its subcellular location is the host nucleus. It localises to the host cytoplasm. The protein resides in the host perinuclear region. It is found in the secreted. The protein localises to the virion membrane. Its subcellular location is the host endoplasmic reticulum membrane. It catalyses the reaction Selective hydrolysis of -Xaa-Xaa-|-Yaa- bonds in which each of the Xaa can be either Arg or Lys and Yaa can be either Ser or Ala.. It carries out the reaction RNA(n) + a ribonucleoside 5'-triphosphate = RNA(n+1) + diphosphate. The enzyme catalyses a ribonucleoside 5'-triphosphate + H2O = a ribonucleoside 5'-diphosphate + phosphate + H(+). The catalysed reaction is ATP + H2O = ADP + phosphate + H(+). It catalyses the reaction a 5'-end (5'-triphosphoguanosine)-ribonucleoside in mRNA + S-adenosyl-L-methionine = a 5'-end (N(7)-methyl 5'-triphosphoguanosine)-ribonucleoside in mRNA + S-adenosyl-L-homocysteine. It carries out the reaction a 5'-end (N(7)-methyl 5'-triphosphoguanosine)-ribonucleoside in mRNA + S-adenosyl-L-methionine = a 5'-end (N(7)-methyl 5'-triphosphoguanosine)-(2'-O-methyl-ribonucleoside) in mRNA + S-adenosyl-L-homocysteine + H(+). In terms of biological role, plays a role in virus budding by binding to the cell membrane and gathering the viral RNA into a nucleocapsid that forms the core of a mature virus particle. During virus entry, may induce genome penetration into the host cytoplasm after hemifusion induced by the surface proteins. Can migrate to the cell nucleus where it modulates host functions. Overcomes the anti-viral effects of host EXOC1 by sequestering and degrading the latter through the proteasome degradation pathway. Its function is as follows. Inhibits RNA silencing by interfering with host Dicer. Prevents premature fusion activity of envelope proteins in trans-Golgi by binding to envelope protein E at pH6.0. After virion release in extracellular space, gets dissociated from E dimers. Functionally, acts as a chaperone for envelope protein E during intracellular virion assembly by masking and inactivating envelope protein E fusion peptide. prM is the only viral peptide matured by host furin in the trans-Golgi network probably to avoid catastrophic activation of the viral fusion activity in acidic Golgi compartment prior to virion release. prM-E cleavage is inefficient, and many virions are only partially matured. These uncleaved prM would play a role in immune evasion. In terms of biological role, may play a role in virus budding. Exerts cytotoxic effects by activating a mitochondrial apoptotic pathway through M ectodomain. May display a viroporin activity. Its function is as follows. Binds to host cell surface receptor and mediates fusion between viral and cellular membranes. Envelope protein is synthesized in the endoplasmic reticulum in the form of heterodimer with protein prM. They play a role in virion budding in the ER, and the newly formed immature particle is covered with 60 spikes composed of heterodimer between precursor prM and envelope protein E. The virion is transported to the Golgi apparatus where the low pH causes dissociation of PrM-E heterodimers and formation of E homodimers. prM-E cleavage is inefficient, and many virions are only partially matured. These uncleaved prM would play a role in immune evasion. Involved in immune evasion, pathogenesis and viral replication. Once cleaved off the polyprotein, is targeted to three destinations: the viral replication cycle, the plasma membrane and the extracellular compartment. Essential for viral replication. Required for formation of the replication complex and recruitment of other non-structural proteins to the ER-derived membrane structures. Excreted as a hexameric lipoparticle that plays a role against host immune response. Antagonizing the complement function. Binds to the host macrophages and dendritic cells. Inhibits signal transduction originating from Toll-like receptor 3 (TLR3). Functionally, component of the viral RNA replication complex that functions in virion assembly and antagonizes the host alpha/beta interferon antiviral response. In terms of biological role, required cofactor for the serine protease function of NS3. May have membrane-destabilizing activity and form viroporins. Its function is as follows. Displays three enzymatic activities: serine protease, NTPase and RNA helicase. NS3 serine protease, in association with NS2B, performs its autocleavage and cleaves the polyprotein at dibasic sites in the cytoplasm: C-prM, NS2A-NS2B, NS2B-NS3, NS3-NS4A, NS4A-2K and NS4B-NS5. NS3 RNA helicase binds RNA and unwinds dsRNA in the 3' to 5' direction. Regulates the ATPase activity of the NS3 helicase activity. NS4A allows NS3 helicase to conserve energy during unwinding. Functionally, functions as a signal peptide for NS4B and is required for the interferon antagonism activity of the latter. In terms of biological role, induces the formation of ER-derived membrane vesicles where the viral replication takes place. Inhibits interferon (IFN)-induced host STAT1 phosphorylation and nuclear translocation, thereby preventing the establishment of cellular antiviral state by blocking the IFN-alpha/beta pathway. Inhibits STAT2 translocation in the nucleus after IFN-alpha treatment. Its function is as follows. Replicates the viral (+) and (-) RNA genome, and performs the capping of genomes in the cytoplasm. NS5 methylates viral RNA cap at guanine N-7 and ribose 2'-O positions. Besides its role in RNA genome replication, also prevents the establishment of cellular antiviral state by blocking the interferon-alpha/beta (IFN-alpha/beta) signaling pathway. Inhibits host TYK2 and STAT2 phosphorylation, thereby preventing activation of JAK-STAT signaling pathway. The sequence is that of Genome polyprotein from Kokobera virus (KOKV).